Here is a 119-residue protein sequence, read N- to C-terminus: Ribosome-binding factor A (119 aa).

This sequence belongs to the RbfA family. Monomer. Binds 30S ribosomal subunits, but not 50S ribosomal subunits or 70S ribosomes.

Its subcellular location is the cytoplasm. Functionally, one of several proteins that assist in the late maturation steps of the functional core of the 30S ribosomal subunit. Associates with free 30S ribosomal subunits (but not with 30S subunits that are part of 70S ribosomes or polysomes). Required for efficient processing of 16S rRNA. May interact with the 5'-terminal helix region of 16S rRNA. This chain is Ribosome-binding factor A, found in Citrifermentans bemidjiense (strain ATCC BAA-1014 / DSM 16622 / JCM 12645 / Bem) (Geobacter bemidjiensis).